The sequence spans 148 residues: Large ribosomal subunit protein bL9 (148 aa).

It belongs to the bacterial ribosomal protein bL9 family.

In terms of biological role, binds to the 23S rRNA. This Desulfitobacterium hafniense (strain DSM 10664 / DCB-2) protein is Large ribosomal subunit protein bL9.